A 944-amino-acid chain; its full sequence is Isoleucine--tRNA ligase (944 aa).

The 'HIGH' region motif lies at 58–68 (PYANGQIHIGH). An L-isoleucyl-5'-AMP-binding site is contributed by Glu568. The 'KMSKS' region motif lies at 609-613 (KMSKS). Position 612 (Lys612) interacts with ATP. Zn(2+) is bound by residues Cys907, Cys910, Cys927, and Cys930.

The protein belongs to the class-I aminoacyl-tRNA synthetase family. IleS type 1 subfamily. Monomer. Zn(2+) serves as cofactor.

The protein resides in the cytoplasm. The catalysed reaction is tRNA(Ile) + L-isoleucine + ATP = L-isoleucyl-tRNA(Ile) + AMP + diphosphate. In terms of biological role, catalyzes the attachment of isoleucine to tRNA(Ile). As IleRS can inadvertently accommodate and process structurally similar amino acids such as valine, to avoid such errors it has two additional distinct tRNA(Ile)-dependent editing activities. One activity is designated as 'pretransfer' editing and involves the hydrolysis of activated Val-AMP. The other activity is designated 'posttransfer' editing and involves deacylation of mischarged Val-tRNA(Ile). This is Isoleucine--tRNA ligase from Idiomarina loihiensis (strain ATCC BAA-735 / DSM 15497 / L2-TR).